A 385-amino-acid chain; its full sequence is Palmitoyl-[acyl-carrier-protein] 4-desaturase, chloroplastic (385 aa).

Residues 1-36 (MAMKLNALMTLQCPKRNMFTRIAPPQAGRVRSKVSM) constitute a chloroplast transit peptide. Fe cation-binding residues include Glu-126, Glu-164, His-167, Glu-217, Glu-250, and His-253.

The protein belongs to the fatty acid desaturase type 2 family. In terms of assembly, homodimer. Requires Fe(2+) as cofactor. Found only in tissues which synthesize petroselinic acid, such as developing seeds.

The protein resides in the plastid. The protein localises to the chloroplast. It carries out the reaction hexadecanoyl-[ACP] + 2 reduced [2Fe-2S]-[ferredoxin] + O2 + 2 H(+) = (4Z)-hexadecenoyl-[ACP] + 2 oxidized [2Fe-2S]-[ferredoxin] + 2 H2O. In terms of biological role, converts palmitoyl-ACP to (4Z)-hexadec-4-enoyl-ACP by introduction of a cis double bond between carbons 4 and 5 of the acyl chain. The chain is Palmitoyl-[acyl-carrier-protein] 4-desaturase, chloroplastic from Coriandrum sativum (Coriander).